A 304-amino-acid chain; its full sequence is tRNA-uridine aminocarboxypropyltransferase 1 (304 aa).

S2 is subject to N-acetylserine. Residues 206-209 (DSTW) carry the DXTW motif.

This sequence belongs to the TDD superfamily. DTWD1 family.

Its subcellular location is the nucleus. It carries out the reaction a uridine in tRNA + S-adenosyl-L-methionine = a 3-[(3S)-3-amino-3-carboxypropyl]uridine in tRNA + S-methyl-5'-thioadenosine + H(+). Functionally, catalyzes the formation of 3-(3-amino-3-carboxypropyl)uridine (acp3U) at position 20 in the D-loop of several cytoplasmic tRNAs (acp3U(20)). The protein is tRNA-uridine aminocarboxypropyltransferase 1 of Pongo abelii (Sumatran orangutan).